Here is a 345-residue protein sequence, read N- to C-terminus: Transcription initiation factor IIB (345 aa).

The segment at 20–53 (IVLTCPECKVYPPKIVERFSEGDVVCALCGLVLS) adopts a TFIIB-type zinc-finger fold. Zn(2+) is bound by residues Cys24, Cys27, Cys45, and Cys48. A compositionally biased stretch (basic and acidic residues) spans 65-78 (TFSNDDHNGDDPSR). The interval 65 to 93 (TFSNDDHNGDDPSRVGEASNPLLDGNNLS) is disordered. 2 consecutive repeat copies span residues 136–212 (LCDA…IMKN) and 242–318 (FCSH…ILYE).

The protein belongs to the TFIIB family. Associates with TFIID-IIA (DA complex) to form TFIID-IIA-IIB (DAB-complex) which is then recognized by polymerase II.

Its subcellular location is the nucleus. General factor that plays a major role in the activation of eukaryotic genes transcribed by RNA polymerase II. This chain is Transcription initiation factor IIB (SUA7), found in Saccharomyces cerevisiae (strain ATCC 204508 / S288c) (Baker's yeast).